The following is a 156-amino-acid chain: Peptide deformylase (156 aa).

C90 and H132 together coordinate Fe cation. The active site involves E133. Fe cation is bound at residue H136.

Belongs to the polypeptide deformylase family. It depends on Fe(2+) as a cofactor.

It carries out the reaction N-terminal N-formyl-L-methionyl-[peptide] + H2O = N-terminal L-methionyl-[peptide] + formate. Its function is as follows. Removes the formyl group from the N-terminal Met of newly synthesized proteins. Requires at least a dipeptide for an efficient rate of reaction. N-terminal L-methionine is a prerequisite for activity but the enzyme has broad specificity at other positions. The protein is Peptide deformylase of Natranaerobius thermophilus (strain ATCC BAA-1301 / DSM 18059 / JW/NM-WN-LF).